Consider the following 296-residue polypeptide: Glycine--tRNA ligase alpha subunit (296 aa).

The protein belongs to the class-II aminoacyl-tRNA synthetase family. In terms of assembly, tetramer of two alpha and two beta subunits.

The protein resides in the cytoplasm. The enzyme catalyses tRNA(Gly) + glycine + ATP = glycyl-tRNA(Gly) + AMP + diphosphate. This chain is Glycine--tRNA ligase alpha subunit, found in Listeria innocua serovar 6a (strain ATCC BAA-680 / CLIP 11262).